The sequence spans 237 residues: Probable transcriptional regulatory protein Mfl546 (237 aa).

Residues Met1 to Ser20 form a disordered region. Positions Ala9–Ser20 are enriched in low complexity.

It belongs to the TACO1 family.

It localises to the cytoplasm. In Mesoplasma florum (strain ATCC 33453 / NBRC 100688 / NCTC 11704 / L1) (Acholeplasma florum), this protein is Probable transcriptional regulatory protein Mfl546.